The sequence spans 1002 residues: MVVRYSLLMKVSFAILIFLVGCNENATSSNDQYLTDPDISEQTKKPSRPIIDEKNKGVTDTSVTIEWDKIECEKNFSHYNVIVYRKDRIEDVITIRTRNNSVFIDDLKPNSQYSIDVSSCLHSACSESAKIEFITLNEIDYYHTTEIEKNVYGSLEGEVRFVQTHVISPEGRKNEPEIITGRDALILFKPSIKNSSSILMKIYSEDGLTSKVVMKSPSMLPKTDQPIDIDENNKVVSYSNSYWSAEIPWNKMKSGMSLHFEDENGNLGIIESERIKFSAPSELIIQNIDLGMLYKPRGRNIVIKELERTAVDYFQKVPVSKLIFSDYTPIHFEKITLPNGTVYTEKSADIGGWHQGDMREAVGKALVSTGINNANLGIVASSGYSQQYNRLTNHITAHTNIGYYNNGVVVHGGSGGGGIVTLENTLHNEWSHELGHNYGLGHYVAGGTSHGPDTSWGWDGYYKRFIANFDWKRSPQSNIRPDNQEVVKPFMDKYTYLWDAMSGGYDHQNGIISRYTLHHPYVARIIQDWLKNGAVVINNDYMVWDELKNIYVYKGTNFKVPIKKGVPVVTILGVYDPDKINPSQLYPPTYSNYGNIFDLEKPRSESSLKGWQYVKDVNYLDRVNTHWHTMLVNRKEEKICRFSYLSPKGKKFEFLGYEDIENKICTGGRSIHYLEDGKKNPIESKYNDYFLLSIDGDGEISYVPDSTIGESKICSLKMSGTVYGAGFIKGNSCRQIDGVFMNGFQWAFTLNQSGVNSTYTWSNECVLKIKDKDNNIESISIPNYRIEKNQSNKIHLNISREKPIIDINVYCGEHELTSIKVSDNPDIKLLKGPIIVGQEHGYTSYEPKLPSGWFKHYDNFEPKNEINHELGKMRVNDNDEYICRFNFSDSDREMKFVGYVSQLSESKYICTGGSEIYYKKNEINIELSSKENDFEWLSVRDKNLVGSKIEFDNNKTLCVLDNRSFYGAGYLDENNRCTQDRQIHWSNGKQWLFSTYKTMTYH.

Positions 1 to 21 (MVVRYSLLMKVSFAILIFLVG) are cleaved as a signal peptide. A lipid anchor (N-palmitoyl cysteine) is attached at Cys-22. The S-diacylglycerol cysteine moiety is linked to residue Cys-22. The disordered stretch occupies residues 31-53 (DQYLTDPDISEQTKKPSRPIIDE). Residues 45–139 (KPSRPIIDEK…KIEFITLNEI (95 aa)) form the Fibronectin type-III domain. The 255-residue stretch at 282 to 536 (ELIIQNIDLG…QDWLKNGAVV (255 aa)) folds into the Peptidase M66 domain. His-432 contacts Zn(2+). The active site involves Glu-433. Positions 436 and 442 each coordinate Zn(2+).

Zn(2+) is required as a cofactor.

The protein localises to the cell membrane. The polypeptide is ToxR-activated gene A lipoprotein (tagA) (Vibrio cholerae serotype O1 (strain ATCC 39315 / El Tor Inaba N16961)).